The sequence spans 289 residues: Type III pantothenate kinase (289 aa).

ATP is bound at residue 9-16 (DAGNSRVK). Residues tyrosine 106 and 113–116 (GSDR) contribute to the substrate site. Aspartate 115 acts as the Proton acceptor in catalysis. Threonine 139 contacts ATP. Threonine 209 provides a ligand contact to substrate.

It belongs to the type III pantothenate kinase family. As to quaternary structure, homodimer. NH4(+) serves as cofactor. Requires K(+) as cofactor.

It is found in the cytoplasm. The catalysed reaction is (R)-pantothenate + ATP = (R)-4'-phosphopantothenate + ADP + H(+). It participates in cofactor biosynthesis; coenzyme A biosynthesis; CoA from (R)-pantothenate: step 1/5. Catalyzes the phosphorylation of pantothenate (Pan), the first step in CoA biosynthesis. The sequence is that of Type III pantothenate kinase from Paraburkholderia phymatum (strain DSM 17167 / CIP 108236 / LMG 21445 / STM815) (Burkholderia phymatum).